A 227-amino-acid polypeptide reads, in one-letter code: Uracil-DNA glycosylase (227 aa).

The active-site Proton acceptor is the D65.

It belongs to the uracil-DNA glycosylase (UDG) superfamily. UNG family.

Its subcellular location is the cytoplasm. It catalyses the reaction Hydrolyzes single-stranded DNA or mismatched double-stranded DNA and polynucleotides, releasing free uracil.. Functionally, excises uracil residues from the DNA which can arise as a result of misincorporation of dUMP residues by DNA polymerase or due to deamination of cytosine. This is Uracil-DNA glycosylase from Lactobacillus delbrueckii subsp. bulgaricus (strain ATCC 11842 / DSM 20081 / BCRC 10696 / JCM 1002 / NBRC 13953 / NCIMB 11778 / NCTC 12712 / WDCM 00102 / Lb 14).